The following is a 319-amino-acid chain: Ciliary microtubule inner protein 2A (319 aa).

The protein belongs to the CIMIP2 family. Microtubule inner protein component of sperm flagellar doublet microtubules.

Its subcellular location is the cytoplasm. The protein resides in the cytoskeleton. It is found in the flagellum axoneme. Microtubule inner protein (MIP) part of the dynein-decorated doublet microtubules (DMTs) in flagellum axoneme. Binds to the intra-tubulin interfaces. The chain is Ciliary microtubule inner protein 2A (Cimip2a) from Mus musculus (Mouse).